Reading from the N-terminus, the 438-residue chain is Chaperone SurA (438 aa).

The signal sequence occupies residues 1–28; it reads MKTMNPYIRHLILLICCLGGMLAQPLSA. 2 consecutive PpiC domains span residues 181–282 and 292–390; these read EEEY…KLVS and VQQT…QVLE.

The protein localises to the periplasm. It catalyses the reaction [protein]-peptidylproline (omega=180) = [protein]-peptidylproline (omega=0). Its function is as follows. Chaperone involved in the correct folding and assembly of outer membrane proteins. Recognizes specific patterns of aromatic residues and the orientation of their side chains, which are found more frequently in integral outer membrane proteins. May act in both early periplasmic and late outer membrane-associated steps of protein maturation. This is Chaperone SurA from Dechloromonas aromatica (strain RCB).